A 209-amino-acid polypeptide reads, in one-letter code: J domain-containing protein spf31 (209 aa).

One can recognise a J domain in the interval 31–96 (NAYDVLDILP…KIRESLDSAY (66 aa)). 2 disordered regions span residues 149–175 (ANQQ…EKVW) and 187–209 (QDFL…RVLG). Residues 154 to 175 (EQARQDEIARERKRRVESEKVW) are compositionally biased toward basic and acidic residues. Positions 192-209 (KTKKNNLKKKNKKPRVLG) are enriched in basic residues.

The polypeptide is J domain-containing protein spf31 (spf31) (Schizosaccharomyces pombe (strain 972 / ATCC 24843) (Fission yeast)).